A 128-amino-acid chain; its full sequence is Small ribosomal subunit protein uS11 (128 aa).

The protein belongs to the universal ribosomal protein uS11 family. In terms of assembly, part of the 30S ribosomal subunit. Interacts with proteins S7 and S18. Binds to IF-3.

In terms of biological role, located on the platform of the 30S subunit, it bridges several disparate RNA helices of the 16S rRNA. Forms part of the Shine-Dalgarno cleft in the 70S ribosome. The chain is Small ribosomal subunit protein uS11 from Desulfosudis oleivorans (strain DSM 6200 / JCM 39069 / Hxd3) (Desulfococcus oleovorans).